Reading from the N-terminus, the 507-residue chain is Arabinose import ATP-binding protein AraG (507 aa).

ABC transporter domains lie at 14-249 (LRFN…MVGR) and 249-505 (RDIQ…LPRT). 46–53 (GENGAGKS) is an ATP binding site.

Belongs to the ABC transporter superfamily. Arabinose importer (TC 3.A.1.2.2) family. As to quaternary structure, the complex is composed of two ATP-binding proteins (AraG), two transmembrane proteins (AraH) and a solute-binding protein (AraF).

The protein resides in the cell inner membrane. It catalyses the reaction L-arabinose(out) + ATP + H2O = L-arabinose(in) + ADP + phosphate + H(+). In terms of biological role, part of the ABC transporter complex AraFGH involved in arabinose import. Responsible for energy coupling to the transport system. The polypeptide is Arabinose import ATP-binding protein AraG (Pseudomonas syringae pv. syringae (strain B728a)).